Consider the following 272-residue polypeptide: U11/U12 small nuclear ribonucleoprotein 35 kDa protein (272 aa).

The RRM domain maps to 51–129 (LTLFVSRLSP…REVFVDFELE (79 aa)). 2 stretches are compositionally biased toward basic and acidic residues: residues 146–162 (GKKE…DRPF) and 190–272 (RDRS…EHNR). The disordered stretch occupies residues 146-272 (GKKESGQLRF…RKHRSDEHNR (127 aa)). A coiled-coil region spans residues 221–258 (TKDDKEQNAEHTKRERSREQAKNDKDKEKKDSKRERSR).

It is found in the nucleus. The chain is U11/U12 small nuclear ribonucleoprotein 35 kDa protein (snrnp35) from Xenopus laevis (African clawed frog).